The primary structure comprises 243 residues: Undecaprenyl-phosphate mannosyltransferase (243 aa).

Belongs to the glycosyltransferase 2 family.

The enzyme catalyses di-trans,octa-cis-undecaprenyl phosphate + GDP-alpha-D-mannose = D-mannosyl di-trans,octa-cis-undecaprenyl phosphate + GDP. In terms of biological role, catalyzes the transfer of mannose from GDP-mannose to D-mannosyl-1-phosphoundecaprenol. The chain is Undecaprenyl-phosphate mannosyltransferase from Micrococcus luteus (strain ATCC 4698 / DSM 20030 / JCM 1464 / CCM 169 / CCUG 5858 / IAM 1056 / NBRC 3333 / NCIMB 9278 / NCTC 2665 / VKM Ac-2230) (Micrococcus lysodeikticus).